The chain runs to 728 residues: Phosphoribosylformylglycinamidine synthase subunit PurL (728 aa).

Residue histidine 42 is part of the active site. Tyrosine 45 and lysine 84 together coordinate ATP. A Mg(2+)-binding site is contributed by glutamate 86. Substrate-binding positions include 87 to 90 (SHNH) and arginine 109. Residue histidine 88 is the Proton acceptor of the active site. Aspartate 110 contributes to the Mg(2+) binding site. Residue glutamine 237 coordinates substrate. Aspartate 265 contributes to the Mg(2+) binding site. Position 309–311 (309–311 (ESQ)) interacts with substrate. 2 residues coordinate ATP: aspartate 491 and glycine 528. Asparagine 529 provides a ligand contact to Mg(2+). Serine 531 serves as a coordination point for substrate.

This sequence belongs to the FGAMS family. As to quaternary structure, monomer. Part of the FGAM synthase complex composed of 1 PurL, 1 PurQ and 2 PurS subunits.

The protein resides in the cytoplasm. The enzyme catalyses N(2)-formyl-N(1)-(5-phospho-beta-D-ribosyl)glycinamide + L-glutamine + ATP + H2O = 2-formamido-N(1)-(5-O-phospho-beta-D-ribosyl)acetamidine + L-glutamate + ADP + phosphate + H(+). It participates in purine metabolism; IMP biosynthesis via de novo pathway; 5-amino-1-(5-phospho-D-ribosyl)imidazole from N(2)-formyl-N(1)-(5-phospho-D-ribosyl)glycinamide: step 1/2. In terms of biological role, part of the phosphoribosylformylglycinamidine synthase complex involved in the purines biosynthetic pathway. Catalyzes the ATP-dependent conversion of formylglycinamide ribonucleotide (FGAR) and glutamine to yield formylglycinamidine ribonucleotide (FGAM) and glutamate. The FGAM synthase complex is composed of three subunits. PurQ produces an ammonia molecule by converting glutamine to glutamate. PurL transfers the ammonia molecule to FGAR to form FGAM in an ATP-dependent manner. PurS interacts with PurQ and PurL and is thought to assist in the transfer of the ammonia molecule from PurQ to PurL. The chain is Phosphoribosylformylglycinamidine synthase subunit PurL from Campylobacter jejuni (strain RM1221).